Reading from the N-terminus, the 419-residue chain is Octopressin receptor (419 aa).

At 1-37 the chain is on the extracellular side; it reads MENFTEENLHPWITTTTRVYNNVTIFPQYDDELGKFE. Residues Asn3 and Asn22 are each glycosylated (N-linked (GlcNAc...) asparagine). A helical transmembrane segment spans residues 38–58; that stretch reads IMVLCILCFMALFGNAVVLIV. At 59 to 80 the chain is on the cytoplasmic side; that stretch reads LRIKKTTLTRMQLLIVYLSVTD. A helical membrane pass occupies residues 81 to 101; the sequence is ISVALFHILPTIILKINVYFL. Residues 102 to 108 lie on the Extracellular side of the membrane; the sequence is GDISACR. A disulfide bridge links Cys107 with Cys182. Residues 109–129 traverse the membrane as a helical segment; the sequence is VYQFITVAELYASSFVLIVTA. Topologically, residues 130-153 are cytoplasmic; that stretch reads LDRYISICHPLAAHMWTNRRVHMT. The chain crosses the membrane as a helical span at residues 154–174; the sequence is TALALFLALMCSLPQLDAVLV. At 175–192 the chain is on the extracellular side; the sequence is DFHGGKLCRPNLTTELAN. N-linked (GlcNAc...) asparagine glycosylation is present at Asn185. A helical membrane pass occupies residues 193–213; the sequence is IAYSWWAFCSVFFVPLLLLIF. Residues 214-292 lie on the Cytoplasmic side of the membrane; sequence FYGRICFVVW…VSKSKIKTIK (79 aa). The disordered stretch occupies residues 253–274; sequence SQTSSENRVKNYSDARDKDSSR. A compositionally biased stretch (basic and acidic residues) spans 259-274; sequence NRVKNYSDARDKDSSR. A helical membrane pass occupies residues 293-313; that stretch reads LTFSVVACFIICYTPFFTVLM. Over 314–329 the chain is Extracellular; it reads ARTYDAELSSAQTPAL. The chain crosses the membrane as a helical span at residues 330 to 350; the sequence is VILSLLPSLNSCTNPWIYLAF. The Cytoplasmic portion of the chain corresponds to 351-419; that stretch reads SGKVWCRQQS…TTALMSSSPC (69 aa).

Belongs to the G-protein coupled receptor 1 family. Vasopressin/oxytocin receptor subfamily. As to expression, present in the nervous system and peripheral tissues.

The protein resides in the cell membrane. Its function is as follows. Acts as a receptor for octopressin. This is Octopressin receptor from Octopus vulgaris (Common octopus).